We begin with the raw amino-acid sequence, 234 residues long: MEKKDMLYEGKAKKIFGTDDKDTVVVYYKDDATAFNGEKKGTIEDKGVMNNSITAMLFELLEKKGVKTHFIEKINEREQLCKKVEIVPLEVIVRNIAAGSMAKRLGLSEGRKLDTTVFEISYKNDDLNDPLINDYHAVAIGLTTFAELKEMYSIAEKVNNTLKEFFDEQGINLVDFKIEIGRFNGELLLADEISPDTCRLWDKSTGEKLDKDRFRRDMGNVKEAYMEILKRVNK.

The protein belongs to the SAICAR synthetase family.

It carries out the reaction 5-amino-1-(5-phospho-D-ribosyl)imidazole-4-carboxylate + L-aspartate + ATP = (2S)-2-[5-amino-1-(5-phospho-beta-D-ribosyl)imidazole-4-carboxamido]succinate + ADP + phosphate + 2 H(+). The protein operates within purine metabolism; IMP biosynthesis via de novo pathway; 5-amino-1-(5-phospho-D-ribosyl)imidazole-4-carboxamide from 5-amino-1-(5-phospho-D-ribosyl)imidazole-4-carboxylate: step 1/2. This Clostridium botulinum (strain Okra / Type B1) protein is Phosphoribosylaminoimidazole-succinocarboxamide synthase.